We begin with the raw amino-acid sequence, 638 residues long: Growth hormone receptor (638 aa).

The N-terminal stretch at 1 to 18 (MDLWQLLLTLALAGSSDA) is a signal peptide. Topologically, residues 19-264 (FSGSEPTAAI…NQFTCEEDFY (246 aa)) are extracellular. N-linked (GlcNAc...) asparagine glycosylation is present at Asn-46. 2 cysteine pairs are disulfide-bonded: Cys-56–Cys-66 and Cys-101–Cys-112. Residue Asn-115 is glycosylated (N-linked (GlcNAc...) asparagine). Cys-126 and Cys-140 are joined by a disulfide. In terms of domain architecture, Fibronectin type-III spans 151–254 (PPIALNWTLL…EVLYVTLPQM (104 aa)). 3 N-linked (GlcNAc...) asparagine glycosylation sites follow: Asn-156, Asn-161, and Asn-200. The short motif at 240-244 (YGEFS) is the WSXWS motif element. The helical transmembrane segment at 265–288 (FPWLLIIIFGIFGLTVMLFVFLFS) threads the bilayer. Topologically, residues 289–638 (KQQRIKMLIL…STDQLNKIMP (350 aa)) are cytoplasmic. The tract at residues 294–379 (KMLILPPVPV…HQKSHSNLGV (86 aa)) is required for JAK2 binding. The short motif at 297-305 (ILPPVPVPK) is the Box 1 motif element. Positions 340–349 (DSWVEFIELD) match the UbE motif motif. Phosphoserine is present on Ser-341. The tract at residues 353 to 388 (PDEKNEGSDTDRLLSSDHQKSHSNLGVKDGDSGRTS) is disordered. The span at 356-372 (KNEGSDTDRLLSSDHQK) shows a compositional bias: basic and acidic residues. A phosphotyrosine mark is found at Tyr-487 and Tyr-595.

This sequence belongs to the type I cytokine receptor family. Type 1 subfamily. As to quaternary structure, on growth hormone (GH) binding, forms homodimers and binds JAK2 via a box 1-containing domain. The soluble form (GHBP) is produced by phorbol ester-promoted proteolytic cleavage at the cell surface (shedding) by ADAM17/TACE. Shedding is inhibited by growth hormone (GH) binding to the receptor probably due to a conformational change in GHR rendering the receptor inaccessible to ADAM17. In terms of processing, on GH binding, phosphorylated on tyrosine residues in the cytoplasmic domain by JAK2. Post-translationally, ubiquitinated by the ECS(SOCS2) complex following ligand-binding and phosphorylation by JAK2, leading to its degradation by the proteasome. Regulation by the ECS(SOCS2) complex acts as a negative feedback loop of growth hormone receptor signaling. Ubiquitination is not sufficient for GHR internalization.

The protein localises to the cell membrane. The protein resides in the secreted. Functionally, receptor for pituitary gland growth hormone (GH1) involved in regulating postnatal body growth. On ligand binding, couples to the JAK2/STAT5 pathway. Its function is as follows. The soluble form (GHBP) acts as a reservoir of growth hormone in plasma and may be a modulator/inhibitor of GH signaling. In Macaca mulatta (Rhesus macaque), this protein is Growth hormone receptor (GHR).